The chain runs to 206 residues: tRNA(Phe) 7-((3-amino-3-carboxypropyl)-4-demethylwyosine(37)-N(4))-methyltransferase 2 (206 aa).

It belongs to the TYW3 family.

The enzyme catalyses 4-demethyl-7-[(3S)-3-amino-3-carboxypropyl]wyosine(37) in tRNA(Phe) + S-adenosyl-L-methionine = 7-[(3S)-3-amino-3-carboxypropyl]wyosine(37) in tRNA(Phe) + S-adenosyl-L-homocysteine + H(+). In terms of biological role, S-adenosyl-L-methionine-dependent methyltransferase that acts as a component of the wyosine derivatives biosynthesis pathway. Probably methylates N-4 position of wybutosine-86 to produce wybutosine-72. The sequence is that of tRNA(Phe) 7-((3-amino-3-carboxypropyl)-4-demethylwyosine(37)-N(4))-methyltransferase 2 from Pyrococcus horikoshii (strain ATCC 700860 / DSM 12428 / JCM 9974 / NBRC 100139 / OT-3).